Reading from the N-terminus, the 523-residue chain is MSQQVIIFDTTLRDGEQALQASLSVKEKLQIALALERMGVDVMEVGFPVSSPGDFESVQTIARQVKNSRVCALARCVEKDIDVAAESLKVAEAFRIHTFIATSPMHIATKLRSTLDEVIERAIYMVKRARNYTDDVEFSCEDAGRTPIADLARVVEAAINAGATTINIPDTVGYTMPFEFAGIISGLYERVPNIDKAIISVHTHDDLGLAVGNSLAAVHAGARQVEGAMNGIGERAGNCSLEEVIMAIKVRKDILNVHTAINHQEIWRTSQLVSQICNMPIPANKAIVGSGAFAHSSGIHQDGVLKNRENYEIMTPESIGLNQIQLNLTSRSGRAAVKHRMDEMGYKESEYNLDNLYDAFLKLADKKGQVFDYDLEALAFIGKQQEEPEHFRLDYFSVQSGSNDIATAAVKLACGEEVKAEAANGNGPVDAVYQAINRITDYNVELVKYSLTAKGHGKDALGQVDIVANYNGRRFHGVGLATDIVESSAKAMVHVLNNIWRATEVEKELQRKAQHNENNKETV.

The 263-residue stretch at 5-267 folds into the Pyruvate carboxyltransferase domain; sequence VIIFDTTLRD…HTAINHQEIW (263 aa). The Mn(2+) site is built by Asp-14, His-202, His-204, and Asn-238. The interval 392–523 is regulatory domain; it reads RLDYFSVQSG…QHNENNKETV (132 aa).

It belongs to the alpha-IPM synthase/homocitrate synthase family. LeuA type 1 subfamily. Homodimer. Mn(2+) is required as a cofactor.

It localises to the cytoplasm. The enzyme catalyses 3-methyl-2-oxobutanoate + acetyl-CoA + H2O = (2S)-2-isopropylmalate + CoA + H(+). It participates in amino-acid biosynthesis; L-leucine biosynthesis; L-leucine from 3-methyl-2-oxobutanoate: step 1/4. Catalyzes the condensation of the acetyl group of acetyl-CoA with 3-methyl-2-oxobutanoate (2-ketoisovalerate) to form 3-carboxy-3-hydroxy-4-methylpentanoate (2-isopropylmalate). This is 2-isopropylmalate synthase from Escherichia coli O157:H7.